The sequence spans 124 residues: uncharacterized protein (124 aa).

The protein belongs to the asfivirus H124R family.

The protein resides in the virion. This is an uncharacterized protein from Ornithodoros (relapsing fever ticks).